The sequence spans 203 residues: LexA repressor (203 aa).

The H-T-H motif DNA-binding region spans 30-50 (VREICQAVSLKSTSTVHGHLK). Residues S127 and K164 each act as for autocatalytic cleavage activity in the active site.

It belongs to the peptidase S24 family. Homodimer.

The catalysed reaction is Hydrolysis of Ala-|-Gly bond in repressor LexA.. In terms of biological role, represses a number of genes involved in the response to DNA damage (SOS response), including recA and lexA. In the presence of single-stranded DNA, RecA interacts with LexA causing an autocatalytic cleavage which disrupts the DNA-binding part of LexA, leading to derepression of the SOS regulon and eventually DNA repair. The chain is LexA repressor from Clostridium perfringens (strain ATCC 13124 / DSM 756 / JCM 1290 / NCIMB 6125 / NCTC 8237 / Type A).